A 472-amino-acid chain; its full sequence is Eukaryotic translation initiation factor 2 subunit 3 (472 aa).

N-acetylalanine is present on A2. S16 carries the post-translational modification Phosphoserine. The tr-type G domain occupies 39 to 248 (QATINIGTIG…IVKKIPVPPR (210 aa)). A G1 region spans residues 48-55 (GHVAHGKS). 51–56 (AHGKST) is a GTP binding site. The interval 76-80 (NITIK) is G2. Residues 134–137 (DCPG) are G3. GTP contacts are provided by residues 190–193 (NKID) and 225–227 (SAQ). Residues 190–193 (NKID) form a G4 region. The tract at residues 225-227 (SAQ) is G5. The interacts with CDC123 stretch occupies residues 457-469 (GQIRRGVTIKPTV).

It belongs to the TRAFAC class translation factor GTPase superfamily. Classic translation factor GTPase family. EIF2G subfamily. In terms of assembly, eukaryotic translation initiation factor 2 eIF2 is a heterotrimeric complex composed of an alpha (EIF2S1), a beta (EIF2S2) and a gamma (EIF2S3) chain. eIF2 is member of the 43S pre-initiation complex (43S PIC). Interacts (via C-terminus) with CDC123; the interaction is direct.

Its subcellular location is the cytoplasm. It is found in the cytosol. It carries out the reaction GTP + H2O = GDP + phosphate + H(+). In terms of biological role, member of the eIF2 complex that functions in the early steps of protein synthesis by forming a ternary complex with GTP and initiator tRNA. This complex binds to a 40S ribosomal subunit, followed by mRNA binding to form the 43S pre-initiation complex (43S PIC). Junction of the 60S ribosomal subunit to form the 80S initiation complex is preceded by hydrolysis of the GTP bound to eIF2 and release of an eIF2-GDP binary complex. In order for eIF2 to recycle and catalyze another round of initiation, the GDP bound to eIF2 must exchange with GTP by way of a reaction catalyzed by eIF-2B. The protein is Eukaryotic translation initiation factor 2 subunit 3 (EIF2S3) of Sus scrofa (Pig).